Here is a 235-residue protein sequence, read N- to C-terminus: 1-(5-phosphoribosyl)-5-[(5-phosphoribosylamino)methylideneamino] imidazole-4-carboxamide isomerase (235 aa).

D8 functions as the Proton acceptor in the catalytic mechanism. The Proton donor role is filled by D127.

The protein belongs to the HisA/HisF family.

The protein resides in the cytoplasm. The enzyme catalyses 1-(5-phospho-beta-D-ribosyl)-5-[(5-phospho-beta-D-ribosylamino)methylideneamino]imidazole-4-carboxamide = 5-[(5-phospho-1-deoxy-D-ribulos-1-ylimino)methylamino]-1-(5-phospho-beta-D-ribosyl)imidazole-4-carboxamide. The protein operates within amino-acid biosynthesis; L-histidine biosynthesis; L-histidine from 5-phospho-alpha-D-ribose 1-diphosphate: step 4/9. This chain is 1-(5-phosphoribosyl)-5-[(5-phosphoribosylamino)methylideneamino] imidazole-4-carboxamide isomerase, found in Nautilia profundicola (strain ATCC BAA-1463 / DSM 18972 / AmH).